We begin with the raw amino-acid sequence, 620 residues long: Chaperone protein HscA homolog (620 aa).

This sequence belongs to the heat shock protein 70 family.

Functionally, chaperone involved in the maturation of iron-sulfur cluster-containing proteins. Has a low intrinsic ATPase activity which is markedly stimulated by HscB. The sequence is that of Chaperone protein HscA homolog from Acinetobacter baumannii (strain SDF).